A 78-amino-acid chain; its full sequence is Sec-independent protein translocase protein TatA (78 aa).

Residues 1-21 (MFGRIGLPEILLILAIALIIF) form a helical membrane-spanning segment. The tract at residues 50–78 (EVNEVEEEVKENKSSDVKENEDNKTEKST) is disordered. Positions 59–78 (KENKSSDVKENEDNKTEKST) are enriched in basic and acidic residues.

This sequence belongs to the TatA/E family. Forms a complex with TatC.

The protein resides in the cell membrane. Its function is as follows. Part of the twin-arginine translocation (Tat) system that transports large folded proteins containing a characteristic twin-arginine motif in their signal peptide across membranes. TatA could form the protein-conducting channel of the Tat system. The sequence is that of Sec-independent protein translocase protein TatA from Natranaerobius thermophilus (strain ATCC BAA-1301 / DSM 18059 / JW/NM-WN-LF).